Here is a 469-residue protein sequence, read N- to C-terminus: Light-independent protochlorophyllide reductase subunit N (469 aa).

Residues cysteine 24, cysteine 49, and cysteine 109 each contribute to the [4Fe-4S] cluster site.

Belongs to the BchN/ChlN family. Protochlorophyllide reductase is composed of three subunits; ChlL, ChlN and ChlB. Forms a heterotetramer of two ChlB and two ChlN subunits. [4Fe-4S] cluster serves as cofactor.

It carries out the reaction chlorophyllide a + oxidized 2[4Fe-4S]-[ferredoxin] + 2 ADP + 2 phosphate = protochlorophyllide a + reduced 2[4Fe-4S]-[ferredoxin] + 2 ATP + 2 H2O. Its pathway is porphyrin-containing compound metabolism; chlorophyll biosynthesis (light-independent). Functionally, component of the dark-operative protochlorophyllide reductase (DPOR) that uses Mg-ATP and reduced ferredoxin to reduce ring D of protochlorophyllide (Pchlide) to form chlorophyllide a (Chlide). This reaction is light-independent. The NB-protein (ChlN-ChlB) is the catalytic component of the complex. In Synechocystis sp. (strain ATCC 27184 / PCC 6803 / Kazusa), this protein is Light-independent protochlorophyllide reductase subunit N.